An 87-amino-acid polypeptide reads, in one-letter code: Sec-independent protein translocase protein TatA (87 aa).

Residues 1 to 21 (MGSFSITHWLILLVVVVVVFG) traverse the membrane as a helical segment. The interval 56–87 (VLDHDAGTNPPNITGTQSDTTSANKVDDTHNV) is disordered. Positions 64-79 (NPPNITGTQSDTTSAN) are enriched in polar residues.

This sequence belongs to the TatA/E family. As to quaternary structure, the Tat system comprises two distinct complexes: a TatABC complex, containing multiple copies of TatA, TatB and TatC subunits, and a separate TatA complex, containing only TatA subunits. Substrates initially bind to the TatABC complex, which probably triggers association of the separate TatA complex to form the active translocon.

The protein resides in the cell inner membrane. In terms of biological role, part of the twin-arginine translocation (Tat) system that transports large folded proteins containing a characteristic twin-arginine motif in their signal peptide across membranes. TatA could form the protein-conducting channel of the Tat system. The sequence is that of Sec-independent protein translocase protein TatA from Psychrobacter arcticus (strain DSM 17307 / VKM B-2377 / 273-4).